Here is a 157-residue protein sequence, read N- to C-terminus: MSPAAGVPELPALDGKGLRLAIVASTWHETICDALLDGARKVAVGAGIDDPTVVRVLGAIEIPVVAQALARTHDAVVALGVVIRGETPHFDYVCDAVTQGLTRVSLDASTPVANGVLTTNTEHQALDRAGLPDSAEDKGAQAAAAALSTALTLRQLS.

5-amino-6-(D-ribitylamino)uracil contacts are provided by residues Trp27, 59-61 (AIE), and 81-83 (VVI). 86–87 (ET) is a (2S)-2-hydroxy-3-oxobutyl phosphate binding site. His89 (proton donor) is an active-site residue. Asn114 is a binding site for 5-amino-6-(D-ribitylamino)uracil. Arg128 contacts (2S)-2-hydroxy-3-oxobutyl phosphate.

The protein belongs to the DMRL synthase family. In terms of assembly, homopentamer.

It catalyses the reaction (2S)-2-hydroxy-3-oxobutyl phosphate + 5-amino-6-(D-ribitylamino)uracil = 6,7-dimethyl-8-(1-D-ribityl)lumazine + phosphate + 2 H2O + H(+). It functions in the pathway cofactor biosynthesis; riboflavin biosynthesis; riboflavin from 2-hydroxy-3-oxobutyl phosphate and 5-amino-6-(D-ribitylamino)uracil: step 1/2. Catalyzes the formation of 6,7-dimethyl-8-ribityllumazine by condensation of 5-amino-6-(D-ribitylamino)uracil with 3,4-dihydroxy-2-butanone 4-phosphate. This is the penultimate step in the biosynthesis of riboflavin. The sequence is that of 6,7-dimethyl-8-ribityllumazine synthase from Mycolicibacterium vanbaalenii (strain DSM 7251 / JCM 13017 / BCRC 16820 / KCTC 9966 / NRRL B-24157 / PYR-1) (Mycobacterium vanbaalenii).